Reading from the N-terminus, the 283-residue chain is Undecaprenyl-diphosphatase (283 aa).

A run of 7 helical transmembrane segments spans residues 40–60 (GAAFTAIVQIGTLAAVLIYFF), 85–105 (AKMGWMIAAGTIPIVIFGLLF), 113–133 (LRSLYWISGALIGLALLLTIA), 153–173 (IGWKDALLIGLIQSIALIPGS), 193–213 (AARFSFLLSLPSVLAAGVFQL), 227–247 (LIAIIVATIVSGIVGYASIAF), and 259–279 (VFIIYRLLLGSGILLMLATGM).

This sequence belongs to the UppP family.

It is found in the cell inner membrane. The enzyme catalyses di-trans,octa-cis-undecaprenyl diphosphate + H2O = di-trans,octa-cis-undecaprenyl phosphate + phosphate + H(+). Catalyzes the dephosphorylation of undecaprenyl diphosphate (UPP). Confers resistance to bacitracin. The protein is Undecaprenyl-diphosphatase of Chlorobium limicola (strain DSM 245 / NBRC 103803 / 6330).